Reading from the N-terminus, the 35-residue chain is ASKTPVGFIGLGNMGNPMAKNLMKHGYPLIIYDVF.

4-33 provides a ligand contact to NAD(+); the sequence is TPVGFIGLGNMGNPMAKNLMKHGYPLIIYD. N6-acetyllysine; alternate is present on Lys24. Lys24 is modified (N6-succinyllysine; alternate).

This sequence belongs to the HIBADH-related family. 3-hydroxyisobutyrate dehydrogenase subfamily. Homodimer.

Its subcellular location is the mitochondrion. It catalyses the reaction 3-hydroxy-2-methylpropanoate + NAD(+) = 2-methyl-3-oxopropanoate + NADH + H(+). The protein operates within amino-acid degradation; L-valine degradation. The protein is 3-hydroxyisobutyrate dehydrogenase (HIBADH) of Oryctolagus cuniculus (Rabbit).